The sequence spans 157 residues: Deoxyuridine 5'-triphosphate nucleotidohydrolase (157 aa).

Substrate is bound by residues 73-75 (RSG), Asn-86, and 90-92 (TID).

Belongs to the dUTPase family. It depends on Mg(2+) as a cofactor.

It carries out the reaction dUTP + H2O = dUMP + diphosphate + H(+). It functions in the pathway pyrimidine metabolism; dUMP biosynthesis; dUMP from dCTP (dUTP route): step 2/2. Functionally, this enzyme is involved in nucleotide metabolism: it produces dUMP, the immediate precursor of thymidine nucleotides and it decreases the intracellular concentration of dUTP so that uracil cannot be incorporated into DNA. This Azorhizobium caulinodans (strain ATCC 43989 / DSM 5975 / JCM 20966 / LMG 6465 / NBRC 14845 / NCIMB 13405 / ORS 571) protein is Deoxyuridine 5'-triphosphate nucleotidohydrolase.